The chain runs to 322 residues: GDSL esterase/lipase At2g04020 (322 aa).

The N-terminal stretch at 1–26 is a signal peptide; it reads MGLPSSLESYLLLILLSFLNVSTIYS. The active-site Nucleophile is Ser-50. Residue Asn-260 is glycosylated (N-linked (GlcNAc...) asparagine). Residues Asp-296 and His-299 contribute to the active site.

Belongs to the 'GDSL' lipolytic enzyme family.

It localises to the secreted. The chain is GDSL esterase/lipase At2g04020 from Arabidopsis thaliana (Mouse-ear cress).